The sequence spans 732 residues: Catalase-peroxidase (732 aa).

The disordered stretch occupies residues 1–23; it reads MSEQSRCPVTGRTADSPATGSGL. A cross-link (tryptophyl-tyrosyl-methioninium (Trp-Tyr) (with M-246)) is located at residues 97-220; that stretch reads WHSAGTYRTS…LAAVQMGLIY (124 aa). H98 serves as the catalytic Proton acceptor. A cross-link (tryptophyl-tyrosyl-methioninium (Tyr-Met) (with W-97)) is located at residues 220 to 246; it reads YVNPEGPDGKPDPVAAGRDIRETFARM. H261 contacts heme b.

The protein belongs to the peroxidase family. Peroxidase/catalase subfamily. In terms of assembly, homodimer or homotetramer. The cofactor is heme b. In terms of processing, formation of the three residue Trp-Tyr-Met cross-link is important for the catalase, but not the peroxidase activity of the enzyme.

The catalysed reaction is H2O2 + AH2 = A + 2 H2O. The enzyme catalyses 2 H2O2 = O2 + 2 H2O. In terms of biological role, bifunctional enzyme with both catalase and broad-spectrum peroxidase activity. This Prosthecochloris aestuarii (strain DSM 271 / SK 413) protein is Catalase-peroxidase.